Consider the following 440-residue polypeptide: D-serine dehydratase (440 aa).

N6-(pyridoxal phosphate)lysine is present on Lys116.

It belongs to the serine/threonine dehydratase family. DsdA subfamily. As to quaternary structure, monomer. Pyridoxal 5'-phosphate serves as cofactor.

The enzyme catalyses D-serine = pyruvate + NH4(+). This chain is D-serine dehydratase, found in Salmonella typhi.